Consider the following 39-residue polypeptide: Contryphan-Cal3 (39 aa).

Positions 1-20 are cleaved as a signal peptide; sequence MTRTAVLLLTLLFLVAMAAS. Cys-29 and Cys-35 are disulfide-bonded.

Expressed by the venom duct.

Its subcellular location is the secreted. Its function is as follows. Probable neurotoxin. This Californiconus californicus (California cone) protein is Contryphan-Cal3.